A 147-amino-acid chain; its full sequence is MKVLLLLGFIFCSMAAHGKRMERCEFARRIKQLHLDGYHQISLANWVCLAQWESGFDTKATNYNPGDQSTDYGILQINSHYWCDDGKTPHAANECKVRCSELQEDDLVKAVNCAKKIVDQQGIRAWVAWRNKCEGKDLSKYLEGCHL.

The signal sequence occupies residues 1–18 (MKVLLLLGFIFCSMAAHG). The C-type lysozyme domain occupies 19–147 (KRMERCEFAR…LSKYLEGCHL (129 aa)). 4 cysteine pairs are disulfide-bonded: Cys-24–Cys-145, Cys-48–Cys-133, Cys-83–Cys-99, and Cys-95–Cys-113. Catalysis depends on residues Glu-53 and Asp-71.

It belongs to the glycosyl hydrolase 22 family. As to quaternary structure, monomer.

It localises to the secreted. It catalyses the reaction Hydrolysis of (1-&gt;4)-beta-linkages between N-acetylmuramic acid and N-acetyl-D-glucosamine residues in a peptidoglycan and between N-acetyl-D-glucosamine residues in chitodextrins.. Lysozymes have primarily a bacteriolytic function; those in tissues and body fluids are associated with the monocyte-macrophage system and enhance the activity of immunoagents. This is Lysozyme C (LYZ) from Trichosurus vulpecula (Brush-tailed possum).